We begin with the raw amino-acid sequence, 422 residues long: UDP-N-acetylglucosamine 1-carboxyvinyltransferase (422 aa).

22-23 lines the phosphoenolpyruvate pocket; sequence KN. Position 94 (Arg-94) interacts with UDP-N-acetyl-alpha-D-glucosamine. Catalysis depends on Cys-118, which acts as the Proton donor. Cys-118 carries the post-translational modification 2-(S-cysteinyl)pyruvic acid O-phosphothioketal. UDP-N-acetyl-alpha-D-glucosamine contacts are provided by residues 123-127, Asp-309, and Ile-331; that span reads RPVDL.

This sequence belongs to the EPSP synthase family. MurA subfamily.

Its subcellular location is the cytoplasm. The enzyme catalyses phosphoenolpyruvate + UDP-N-acetyl-alpha-D-glucosamine = UDP-N-acetyl-3-O-(1-carboxyvinyl)-alpha-D-glucosamine + phosphate. It participates in cell wall biogenesis; peptidoglycan biosynthesis. In terms of biological role, cell wall formation. Adds enolpyruvyl to UDP-N-acetylglucosamine. In Cereibacter sphaeroides (strain ATCC 17023 / DSM 158 / JCM 6121 / CCUG 31486 / LMG 2827 / NBRC 12203 / NCIMB 8253 / ATH 2.4.1.) (Rhodobacter sphaeroides), this protein is UDP-N-acetylglucosamine 1-carboxyvinyltransferase.